A 458-amino-acid polypeptide reads, in one-letter code: Glutamyl-tRNA(Gln) amidotransferase subunit D (458 aa).

An Asparaginase/glutaminase domain is found at 97–434 (PNVSVMSTGG…KEVERLMRTN (338 aa)). Residues Thr107, Thr185, Asp186, and Lys264 contribute to the active site.

The protein belongs to the asparaginase 1 family. GatD subfamily. In terms of assembly, heterodimer of GatD and GatE.

The catalysed reaction is L-glutamyl-tRNA(Gln) + L-glutamine + ATP + H2O = L-glutaminyl-tRNA(Gln) + L-glutamate + ADP + phosphate + H(+). Allows the formation of correctly charged Gln-tRNA(Gln) through the transamidation of misacylated Glu-tRNA(Gln) in organisms which lack glutaminyl-tRNA synthetase. The reaction takes place in the presence of glutamine and ATP through an activated gamma-phospho-Glu-tRNA(Gln). The GatDE system is specific for glutamate and does not act on aspartate. This is Glutamyl-tRNA(Gln) amidotransferase subunit D from Methanopyrus kandleri (strain AV19 / DSM 6324 / JCM 9639 / NBRC 100938).